The chain runs to 250 residues: Aliphatic sulfonates import ATP-binding protein SsuB 2 (250 aa).

An ABC transporter domain is found at 13-229; that stretch reads VRLQGLTRSF…SYRDPLLGEY (217 aa). An ATP-binding site is contributed by 45–52; sequence GHSGSGKS.

Belongs to the ABC transporter superfamily. Aliphatic sulfonates importer (TC 3.A.1.17.2) family. As to quaternary structure, the complex is composed of two ATP-binding proteins (SsuB), two transmembrane proteins (SsuC) and a solute-binding protein (SsuA).

The protein localises to the cell membrane. The catalysed reaction is ATP + H2O + aliphatic sulfonate-[sulfonate-binding protein]Side 1 = ADP + phosphate + aliphatic sulfonateSide 2 + [sulfonate-binding protein]Side 1.. Part of the ABC transporter complex SsuABC involved in aliphatic sulfonates import. Responsible for energy coupling to the transport system. This chain is Aliphatic sulfonates import ATP-binding protein SsuB 2, found in Streptomyces avermitilis (strain ATCC 31267 / DSM 46492 / JCM 5070 / NBRC 14893 / NCIMB 12804 / NRRL 8165 / MA-4680).